Reading from the N-terminus, the 457-residue chain is L-lysine-epsilon aminotransferase (457 aa).

2 residues coordinate pyridoxal 5'-phosphate: Gly131 and Ala132. Residues Arg172 and Gln278 each contribute to the 2-oxoglutarate site. Arg172 serves as a coordination point for L-lysine. Gln278 contributes to the pyridoxal 5'-phosphate binding site. Position 304 is an N6-(pyridoxal phosphate)lysine (Lys304). 2-oxoglutarate is bound at residue Arg427.

It belongs to the class-III pyridoxal-phosphate-dependent aminotransferase family. In terms of assembly, monomer. Requires pyridoxal 5'-phosphate as cofactor.

The catalysed reaction is L-lysine + 2-oxoglutarate = (S)-2-amino-6-oxohexanoate + L-glutamate. The protein operates within antibiotic biosynthesis; cephamycin C biosynthesis. Its activity is regulated as follows. Activity is induced in the presence of high concentrations of lysine, but not by L-alpha-aminoadipic acid. Not repressed by ammonium ions. In terms of biological role, catalyzes the transfer of the terminal amino group of L-lysine to alpha-ketoglutarate to yield L-glutamate and 2-aminoadipate 6-semialdehyde ((S)-2-amino-6-oxohexanoate), which is spontaneously converted to the dehydrated form 1-piperideine 6-carboxylate. Shows a high specificity for L-lysine as substrate although L-ornithine can also be used, leading to the formation of an o-aminobenzaldehyde reactive compound. Only cis-oxaloacetate and pyruvate can replace alpha-ketoglutarate, but with very low efficiency. The chain is L-lysine-epsilon aminotransferase from Streptomyces clavuligerus.